The primary structure comprises 662 residues: Leucine aminopeptidase 2 (662 aa).

A peptide-binding positions include 178–180 (QLE) and 304–309 (PYGGME). Position 333 (histidine 333) interacts with Zn(2+). The Proton acceptor role is filled by glutamate 334. Zn(2+) contacts are provided by histidine 337 and glutamate 356. Catalysis depends on tyrosine 422, which acts as the Proton donor.

This sequence belongs to the peptidase M1 family. The cofactor is Zn(2+).

It localises to the cytoplasm. It is found in the nucleus. It catalyses the reaction an epoxide + H2O = an ethanediol. In terms of biological role, aminopeptidase that preferentially cleaves di- and tripeptides. Also has low epoxide hydrolase activity (in vitro). Can hydrolyze the epoxide leukotriene LTA(4) but it forms preferentially 5,6-dihydroxy-7,9,11,14-eicosatetraenoic acid rather than the cytokine leukotriene B(4) as the product compared to the homologous mammalian enzyme (in vitro). This is Leucine aminopeptidase 2 from Kluyveromyces lactis (strain ATCC 8585 / CBS 2359 / DSM 70799 / NBRC 1267 / NRRL Y-1140 / WM37) (Yeast).